Consider the following 255-residue polypeptide: EEF1A lysine methyltransferase 4 (255 aa).

S-adenosyl-L-methionine-binding residues include Trp26 and Tyr30. Position 39 is a phosphotyrosine (Tyr39). Residues Trp41, Gly66, 88–89 (DY), 113–114 (DV), and Lys130 each bind S-adenosyl-L-methionine. Residues 129-134 (EKGTLD) carry the Required for methyltransferase activity motif.

Belongs to the methyltransferase superfamily.

The catalysed reaction is L-lysyl-[protein] + S-adenosyl-L-methionine = N(6)-methyl-L-lysyl-[protein] + S-adenosyl-L-homocysteine + H(+). The enzyme catalyses N(6)-methyl-L-lysyl-[protein] + S-adenosyl-L-methionine = N(6),N(6)-dimethyl-L-lysyl-[protein] + S-adenosyl-L-homocysteine + H(+). It carries out the reaction N(6),N(6)-dimethyl-L-lysyl-[protein] + S-adenosyl-L-methionine = N(6),N(6),N(6)-trimethyl-L-lysyl-[protein] + S-adenosyl-L-homocysteine + H(+). In terms of biological role, protein-lysine methyltransferase that efficiently catalyzes three successive methylations on 'Lys-36' in eukaryotic translation elongation factor 1 alpha (EEF1A1 or EEF1A2). The polypeptide is EEF1A lysine methyltransferase 4 (Mus musculus (Mouse)).